A 199-amino-acid chain; its full sequence is Recombination protein RecR (199 aa).

The segment at 58-73 adopts a C4-type zinc-finger fold; the sequence is CARCGNITSADLCDIC. The Toprim domain maps to 81 to 176; it reads GELCVVEDVA…QVTSLAQGVP (96 aa).

This sequence belongs to the RecR family.

Functionally, may play a role in DNA repair. It seems to be involved in an RecBC-independent recombinational process of DNA repair. It may act with RecF and RecO. The chain is Recombination protein RecR from Cereibacter sphaeroides (strain ATCC 17025 / ATH 2.4.3) (Rhodobacter sphaeroides).